The primary structure comprises 443 residues: ATP-dependent protease ATPase subunit HslU (443 aa).

Residues V18, 60-65 (GVGKTE), D255, E321, and R393 each bind ATP.

It belongs to the ClpX chaperone family. HslU subfamily. As to quaternary structure, a double ring-shaped homohexamer of HslV is capped on each side by a ring-shaped HslU homohexamer. The assembly of the HslU/HslV complex is dependent on binding of ATP.

It is found in the cytoplasm. In terms of biological role, ATPase subunit of a proteasome-like degradation complex; this subunit has chaperone activity. The binding of ATP and its subsequent hydrolysis by HslU are essential for unfolding of protein substrates subsequently hydrolyzed by HslV. HslU recognizes the N-terminal part of its protein substrates and unfolds these before they are guided to HslV for hydrolysis. In Colwellia psychrerythraea (strain 34H / ATCC BAA-681) (Vibrio psychroerythus), this protein is ATP-dependent protease ATPase subunit HslU.